We begin with the raw amino-acid sequence, 772 residues long: Endoplasmic reticulum membrane sensor NFE2L1 (772 aa).

A helical; Signal-anchor for type II membrane protein membrane pass occupies residues 7–24 (YLTEGLLQFTILLSLIGV). Positions 108–148 (DPEGSVSGSQPNSGLALESSSGLQDVTGPDNGVRESETEQG) are disordered. A compositionally biased stretch (polar residues) spans 113 to 131 (VSGSQPNSGLALESSSGLQ). The tract at residues 191–199 (VFDYSHRQK) is cholesterol recognition/amino acid consensus (CRAC) region. N348 is a glycosylation site (N-linked (GlcNAc...) asparagine). The CPD stretch occupies residues 379-383 (SPEVE). 2 N-linked (GlcNAc...) asparagine glycosylation sites follow: N412 and N423. The tract at residues 470–532 (EEEFDSDSGL…AVGYSSDSET (63 aa)) is disordered. The short motif at 476-480 (DSGLS) is the Destruction motif element. Residues 476-523 (DSGLSLDSSHSPSSLSSSEGSSSSSSSSSSSSSSASSSASSSFSEEGA) show a composition bias toward low complexity. Phosphoserine; by CK2 is present on S528. The residue at position 599 (S599) is a Phosphoserine; by PKA. One can recognise a bZIP domain in the interval 654–717 (LIRDIRRRGK…RQMKQKVQSL (64 aa)). Residues 656 to 675 (RDIRRRGKNKMAAQNCRKRK) are basic motif. The leucine-zipper stretch occupies residues 682–696 (LERDVEDLQRDKARL). The interval 753–772 (RTMADQQARRQERKPKDRRK) is disordered. Positions 761 to 768 (RRQERKPK) match the Nuclear localization signal motif. Basic residues predominate over residues 763–772 (QERKPKDRRK).

This sequence belongs to the bZIP family. CNC subfamily. Interacts with KEAP1. In terms of assembly, interacts (via CPD region) with FBXW7; leading to its ubiquitination and degradation. Interacts with SYVN1/HRD1; leading to its ubiquitination and degradation. Interacts (when ubiquitinated) with DDI2; leading to its cleavage. As to quaternary structure, interacts (via the bZIP domain) with small MAF protein (MAFF, MAFG or MAFK); required for binding to antioxidant response elements (AREs) on DNA. Interacts (via Destruction motif) with BTRC; leading to its ubiquitination and degradation. Interacts with CEBPB; the heterodimer represses expression of DSPP during odontoblast differentiation. Interacts with MOTS-c, a peptide produced by the mitochondrially encoded 12S rRNA MT-RNR1. Post-translationally, cleaved at Leu-104 by the aspartyl protease DDI2 following retrotranslocation, releasing the protein from the endoplasmic reticulum membrane and forming the transcription factor NRF1 that translocates into the nucleus. Ubiquitination is prerequisite for cleavage by aspartyl protease DDI2. N-glycosylated in normal conditions, when it has a single-pass type II membrane protein topology, with the DNA-binding domain facing the endoplasmic reticulum lumen. Deglycosylated during retrotranslocation to the cytosolic side of the membrane, to have a single-pass type III membrane protein topology with the major part of the protein facing the cytosol. In terms of processing, ubiquitinated by the SCF(FBXW7) complex and SYVN1/HRD1, leading to its degradation by the proteasome. Ubiquitinated during retrotranslocation to the cytosolic side of the membrane: ubiquitination does not lead to degradation and is required for processing by the aspartyl protease DDI2 and subsequent release from the endoplasmic reticulum membrane. Post-translationally, phosphorylation by CK2 at Ser-528 inhibits transcription factor activity, possibly by affecting DNA-binding activity. Phosphorylation at Ser-599 is required for interaction with CEBPB. Ubiquitinated by the SCF(BTRC) complex in the nucleus, leading to its degradation by the proteasome.

The protein localises to the endoplasmic reticulum membrane. It is found in the nucleus. Endoplasmic reticulum membrane sensor that translocates into the nucleus in response to various stresses to act as a transcription factor. Constitutes a precursor of the transcription factor NRF1. Able to detect various cellular stresses, such as cholesterol excess, oxidative stress or proteasome inhibition. In response to stress, it is released from the endoplasmic reticulum membrane following cleavage by the protease DDI2 and translocates into the nucleus to form the transcription factor NRF1. Acts as a key sensor of cholesterol excess: in excess cholesterol conditions, the endoplasmic reticulum membrane form of the protein directly binds cholesterol via its CRAC motif, preventing cleavage and release of the transcription factor NRF1, thereby allowing expression of genes promoting cholesterol removal, such as CD36. Involved in proteasome homeostasis: in response to proteasome inhibition, it is released from the endoplasmic reticulum membrane, translocates to the nucleus and activates expression of genes encoding proteasome subunits. In terms of biological role, CNC-type bZIP family transcription factor that translocates to the nucleus and regulates expression of target genes in response to various stresses. Heterodimerizes with small-Maf proteins (MAFF, MAFG or MAFK) and binds DNA motifs including the antioxidant response elements (AREs), which regulate expression of genes involved in oxidative stress response. Activates or represses expression of target genes, depending on the context. Plays a key role in cholesterol homeostasis by acting as a sensor of cholesterol excess: in low cholesterol conditions, translocates into the nucleus and represses expression of genes involved in defense against cholesterol excess, such as CD36. In excess cholesterol conditions, the endoplasmic reticulum membrane form of the protein directly binds cholesterol via its CRAC motif, preventing cleavage and release of the transcription factor NRF1, thereby allowing expression of genes promoting cholesterol removal. Critical for redox balance in response to oxidative stress: acts by binding the AREs motifs on promoters and mediating activation of oxidative stress response genes, such as GCLC, GCLM, GSS, MT1 and MT2. Plays an essential role during fetal liver hematopoiesis: probably has a protective function against oxidative stress and is involved in lipid homeostasis in the liver. Involved in proteasome homeostasis: in response to proteasome inhibition, mediates the 'bounce-back' of proteasome subunits by translocating into the nucleus and activating expression of genes encoding proteasome subunits. Also involved in regulating glucose flux. Together with CEBPB; represses expression of DSPP during odontoblast differentiation. In response to ascorbic acid induction, activates expression of SP7/Osterix in osteoblasts. The sequence is that of Endoplasmic reticulum membrane sensor NFE2L1 from Pongo abelii (Sumatran orangutan).